Consider the following 382-residue polypeptide: Mannitol-1-phosphate 5-dehydrogenase (382 aa).

3-14 lines the NAD(+) pocket; it reads ALHFGAGNIGRG.

This sequence belongs to the mannitol dehydrogenase family.

The catalysed reaction is D-mannitol 1-phosphate + NAD(+) = beta-D-fructose 6-phosphate + NADH + H(+). The protein is Mannitol-1-phosphate 5-dehydrogenase of Cronobacter sakazakii (strain ATCC BAA-894) (Enterobacter sakazakii).